A 253-amino-acid chain; its full sequence is Ribosome maturation protein SBDS (253 aa).

This sequence belongs to the SDO1/SBDS family. In terms of assembly, associates with the 60S ribosomal subunit.

Its subcellular location is the cytoplasm. The protein resides in the nucleus. The protein localises to the nucleolus. It is found in the nucleoplasm. It localises to the cytoskeleton. Its subcellular location is the spindle. In terms of biological role, required for the assembly of mature ribosomes and ribosome biogenesis. Together with K10C3.5b/EFL1, triggers the GTP-dependent release of ribosome maturation factors from 60S pre-ribosomes in the cytoplasm, thereby activating ribosomes for translation competence by allowing 80S ribosome assembly. Required for normal levels of protein synthesis. May play a role in cellular stress resistance. May play a role in cellular response to DNA damage. May play a role in cell proliferation. The chain is Ribosome maturation protein SBDS (sbds-1) from Caenorhabditis elegans.